The primary structure comprises 566 residues: Serine/threonine-protein kinase ppk14 (566 aa).

Residues 1-31 show a composition bias toward basic and acidic residues; it reads MNELHDGESSEEGRINVEDHLEEAKKDDTGH. 2 disordered regions span residues 1-39 and 60-152; these read MNEL…GTAK and SRKK…EKLK. Positions 74–85 are enriched in polar residues; it reads AANQSPSGAPES. Residues 119–129 show a composition bias toward basic residues; that stretch reads SFFKSGRKKKD. The segment covering 134-145 has biased composition (polar residues); that stretch reads RNVSRSNGADTS. Residues 195 to 485 form the Protein kinase domain; it reads FEKVFLLGKG…AADVKLHPFF (291 aa). Residues 201–209 and lysine 224 each bind ATP; that span reads LGKGDVGRV. Aspartate 320 functions as the Proton acceptor in the catalytic mechanism. A Phosphothreonine modification is found at threonine 379. A Phosphoserine modification is found at serine 381. Threonine 385 carries the post-translational modification Phosphothreonine.

Belongs to the protein kinase superfamily. Ser/Thr protein kinase family. KIN82 subfamily.

The enzyme catalyses L-seryl-[protein] + ATP = O-phospho-L-seryl-[protein] + ADP + H(+). The catalysed reaction is L-threonyl-[protein] + ATP = O-phospho-L-threonyl-[protein] + ADP + H(+). The chain is Serine/threonine-protein kinase ppk14 (ppk14) from Schizosaccharomyces pombe (strain 972 / ATCC 24843) (Fission yeast).